The primary structure comprises 446 residues: Tubulin beta-6 chain (446 aa).

8 residues coordinate GTP: Gln-11, Glu-69, Ser-138, Gly-142, Thr-143, Gly-144, Asn-204, and Asn-226. Position 69 (Glu-69) interacts with Mg(2+). Positions 426-446 (QDATADEEEYEDEEEVQADDM) are disordered. The segment covering 429-446 (TADEEEYEDEEEVQADDM) has biased composition (acidic residues).

This sequence belongs to the tubulin family. As to quaternary structure, dimer of alpha and beta chains. A typical microtubule is a hollow water-filled tube with an outer diameter of 25 nm and an inner diameter of 15 nM. Alpha-beta heterodimers associate head-to-tail to form protofilaments running lengthwise along the microtubule wall with the beta-tubulin subunit facing the microtubule plus end conferring a structural polarity. Microtubules usually have 13 protofilaments but different protofilament numbers can be found in some organisms and specialized cells. It depends on Mg(2+) as a cofactor.

The protein localises to the cytoplasm. It is found in the cytoskeleton. Tubulin is the major constituent of microtubules, a cylinder consisting of laterally associated linear protofilaments composed of alpha- and beta-tubulin heterodimers. Microtubules grow by the addition of GTP-tubulin dimers to the microtubule end, where a stabilizing cap forms. Below the cap, tubulin dimers are in GDP-bound state, owing to GTPase activity of alpha-tubulin. The polypeptide is Tubulin beta-6 chain (TUBB6) (Zea mays (Maize)).